The primary structure comprises 434 residues: Glutamyl-tRNA reductase (434 aa).

Substrate-binding positions include 54 to 57, serine 113, 118 to 120, and glutamine 124; these read TCNR and EAQ. The active-site Nucleophile is the cysteine 55. 193–198 is a binding site for NADP(+); sequence GGGEVS.

The protein belongs to the glutamyl-tRNA reductase family. Homodimer.

The catalysed reaction is (S)-4-amino-5-oxopentanoate + tRNA(Glu) + NADP(+) = L-glutamyl-tRNA(Glu) + NADPH + H(+). The protein operates within porphyrin-containing compound metabolism; protoporphyrin-IX biosynthesis; 5-aminolevulinate from L-glutamyl-tRNA(Glu): step 1/2. Its pathway is porphyrin-containing compound metabolism; chlorophyll biosynthesis. Its function is as follows. Catalyzes the NADPH-dependent reduction of glutamyl-tRNA(Glu) to glutamate 1-semialdehyde (GSA). The polypeptide is Glutamyl-tRNA reductase (Chloroflexus aurantiacus (strain ATCC 29366 / DSM 635 / J-10-fl)).